A 480-amino-acid polypeptide reads, in one-letter code: 2-phosphoxylose phosphatase 1 (480 aa).

Residues 1-6 lie on the Cytoplasmic side of the membrane; that stretch reads MLFRNR. Residues 7–27 form a helical; Signal-anchor for type II membrane protein membrane-spanning segment; it reads FLLLLALAALLAFVSLSLQFF. Over 28 to 480 the chain is Lumenal; sequence HLIPVSTPKN…YYDACHREGF (453 aa). The active-site Nucleophile is the His97. 2 N-linked (GlcNAc...) asparagine glycosylation sites follow: Asn305 and Asn354. The active-site Proton donor is the Asp379.

It belongs to the histidine acid phosphatase family. As to quaternary structure, interacts with B3GAT3; the interaction increases the 2-phosphoxylose phosphatase activity of PXYLP1 during completion of linkage region formation in a B3GAT3-mediated manner. Widely expressed. Strongly expressed in spleen, fetal liver, moderately in placenta, pancreas, kidney, thymus and colon.

The protein resides in the golgi apparatus membrane. It catalyses the reaction 3-O-[beta-D-GlcA-(1-&gt;3)-beta-D-Gal-(1-&gt;3)-beta-D-Gal-(1-&gt;4)-beta-D-2-O-P-Xyl]-L-seryl-[protein] + H2O = 3-O-(beta-D-GlcA-(1-&gt;3)-beta-D-Gal-(1-&gt;3)-beta-D-Gal-(1-&gt;4)-beta-D-Xyl)-L-seryl-[protein] + phosphate. Its function is as follows. Responsible for the 2-O-dephosphorylation of xylose in the glycosaminoglycan-protein linkage region of proteoglycans thereby regulating the amount of mature glycosaminoglycan (GAG) chains. Sulfated glycosaminoglycans (GAGs), including heparan sulfate and chondroitin sulfate, are synthesized on the so-called common GAG-protein linkage region (GlcUAbeta1-3Galbeta1-3Galbeta1-4Xylbeta1-O-Ser) of core proteins, which is formed by the stepwise addition of monosaccharide residues by the respective specific glycosyltransferases. Xylose 2-O-dephosphorylation during completion of linkage region formation is a prerequisite for the initiation and efficient elongation of the repeating disaccharide region of GAG chains. This is 2-phosphoxylose phosphatase 1 from Homo sapiens (Human).